A 346-amino-acid chain; its full sequence is N-acetyl-gamma-glutamyl-phosphate reductase (346 aa).

The active site involves C149.

It belongs to the NAGSA dehydrogenase family. Type 1 subfamily.

The protein resides in the cytoplasm. The enzyme catalyses N-acetyl-L-glutamate 5-semialdehyde + phosphate + NADP(+) = N-acetyl-L-glutamyl 5-phosphate + NADPH + H(+). The protein operates within amino-acid biosynthesis; L-arginine biosynthesis; N(2)-acetyl-L-ornithine from L-glutamate: step 3/4. Catalyzes the NADPH-dependent reduction of N-acetyl-5-glutamyl phosphate to yield N-acetyl-L-glutamate 5-semialdehyde. In Geobacter sulfurreducens (strain ATCC 51573 / DSM 12127 / PCA), this protein is N-acetyl-gamma-glutamyl-phosphate reductase.